The following is a 315-amino-acid chain: Protein-methionine-sulfoxide reductase catalytic subunit MsrP (315 aa).

The tat-type signal signal peptide spans 1–45; that stretch reads MPSYRPPKIASSEITPRQVYLRRREFLGAATLGAMALYGAGKASA. Mo-molybdopterin-binding positions include asparagine 71, 74 to 75, cysteine 129, threonine 164, asparagine 214, arginine 219, and 230 to 232; these read YE and GIK.

The protein belongs to the MsrP family. In terms of assembly, heterodimer of a catalytic subunit (MsrP) and a heme-binding subunit (MsrQ). Mo-molybdopterin is required as a cofactor. In terms of processing, predicted to be exported by the Tat system. The position of the signal peptide cleavage has not been experimentally proven.

It is found in the periplasm. It carries out the reaction L-methionyl-[protein] + a quinone + H2O = L-methionyl-(S)-S-oxide-[protein] + a quinol. It catalyses the reaction L-methionyl-[protein] + a quinone + H2O = L-methionyl-(R)-S-oxide-[protein] + a quinol. Functionally, part of the MsrPQ system that repairs oxidized periplasmic proteins containing methionine sulfoxide residues (Met-O), using respiratory chain electrons. Thus protects these proteins from oxidative-stress damage caused by reactive species of oxygen and chlorine generated by the host defense mechanisms. MsrPQ is essential for the maintenance of envelope integrity under bleach stress, rescuing a wide series of structurally unrelated periplasmic proteins from methionine oxidation. The catalytic subunit MsrP is non-stereospecific, being able to reduce both (R-) and (S-) diastereoisomers of methionine sulfoxide. This is Protein-methionine-sulfoxide reductase catalytic subunit MsrP from Rhizobium etli (strain ATCC 51251 / DSM 11541 / JCM 21823 / NBRC 15573 / CFN 42).